Here is a 134-residue protein sequence, read N- to C-terminus: Transcription antitermination protein NusB (134 aa).

This sequence belongs to the NusB family.

Involved in transcription antitermination. Required for transcription of ribosomal RNA (rRNA) genes. Binds specifically to the boxA antiterminator sequence of the ribosomal RNA (rrn) operons. This is Transcription antitermination protein NusB from Shewanella amazonensis (strain ATCC BAA-1098 / SB2B).